A 352-amino-acid chain; its full sequence is C5a anaphylatoxin chemotactic receptor 1 (352 aa).

Over residues 1–11 (MDPISNDSSEI) the composition is skewed to polar residues. Residues 1-20 (MDPISNDSSEITYDYSDGTP) form a disordered region. At 1–38 (MDPISNDSSEITYDYSDGTPNPDMPADGVYIPKMEPGD) the chain is on the extracellular side. An N-linked (GlcNAc...) asparagine glycan is attached at N6. Sulfotyrosine occurs at positions 13 and 15. The helical transmembrane segment at 39-65 (IAALIIYLAVFLVGVTGNALVVWVTAF) threads the bilayer. The Cytoplasmic portion of the chain corresponds to 66-70 (EAKRT). The helical transmembrane segment at 71-94 (VNAIWFLNLAVADLLSCLALPILF) threads the bilayer. Over 95–111 (TSIVKHNHWPFGDQACI) the chain is Extracellular. A disulfide bridge connects residues C110 and C189. Residues 112-133 (VLPSLILLNMYSSILLLATISA) form a helical membrane-spanning segment. Over 134 to 154 (DRFLLVFKPIWCQKFRRPGLA) the chain is Cytoplasmic. The chain crosses the membrane as a helical span at residues 155–175 (WMACGVTWVLALLLTIPSFVF). The Extracellular portion of the chain corresponds to 176-202 (RRIHKDPYSDSILCNIDYSKGPFFIEK). Residues 203–228 (AIAILRLMVGFVLPLLTLNICYTFLL) traverse the membrane as a helical segment. At 229–244 (IRTWSRKATRSTKTLK) the chain is on the cytoplasmic side. The chain crosses the membrane as a helical span at residues 245 to 267 (VVMAVVTCFFVFWLPYQVTGVIL). At 268-284 (AWLPRSSSTFQSVERLN) the chain is on the extracellular side. Residues 285–305 (SLCVSLAYINCCVNPIIYVMA) form a helical membrane-spanning segment. The Cytoplasmic segment spans residues 306–352 (GQGFHGRLRRSLPSIIRNVLSEDSLGRDSKSFTRSTMDTSTQKSQAV). S316, S319, S326, S329, S334, S336, and S340 each carry phosphoserine. The segment at 332–352 (RDSKSFTRSTMDTSTQKSQAV) is disordered. The span at 337 to 352 (FTRSTMDTSTQKSQAV) shows a compositional bias: polar residues.

The protein belongs to the G-protein coupled receptor 1 family. In terms of assembly, homodimer. May also form higher-order oligomers. Interacts (when phosphorylated) with ARRB1 and ARRB2; the interaction is associated with internalization of C5aR. In terms of processing, sulfation plays a critical role in the association of C5aR with C5a, but no significant role in the ability of the receptor to transduce a signal and mobilize calcium in response to a small peptide agonist. Post-translationally, phosphorylated on serine residues in response to C5a binding, resulting in internalization of the receptor and short-term desensitization to the ligand.

The protein resides in the cell membrane. Its subcellular location is the cytoplasmic vesicle. Its function is as follows. Receptor for the chemotactic and inflammatory peptide anaphylatoxin C5a. The ligand interacts with at least two sites on the receptor: a high-affinity site on the extracellular N-terminus, and a second site in the transmembrane region which activates downstream signaling events. Receptor activation stimulates chemotaxis, granule enzyme release, intracellular calcium release and superoxide anion production. This Rattus norvegicus (Rat) protein is C5a anaphylatoxin chemotactic receptor 1 (C5ar1).